The following is a 451-amino-acid chain: Phosphoglucosamine mutase (451 aa).

Residue Ser102 is the Phosphoserine intermediate of the active site. Positions 102, 243, 245, and 247 each coordinate Mg(2+). Phosphoserine is present on Ser102.

This sequence belongs to the phosphohexose mutase family. Mg(2+) is required as a cofactor. In terms of processing, activated by phosphorylation.

It catalyses the reaction alpha-D-glucosamine 1-phosphate = D-glucosamine 6-phosphate. Its function is as follows. Catalyzes the conversion of glucosamine-6-phosphate to glucosamine-1-phosphate. In Salinispora arenicola (strain CNS-205), this protein is Phosphoglucosamine mutase.